The primary structure comprises 362 residues: Patr class I histocompatibility antigen, A-5 alpha chain (362 aa).

Positions 1–24 (MQVTAPRTVLLLLSAALALTETWA) are cleaved as a signal peptide. The segment at 25 to 114 (GSHSMKYFYT…LRGYYNQSEA (90 aa)) is alpha-1. Residues 25–308 (GSHSMKYFYT…EPSSQSTIPI (284 aa)) are Extracellular-facing. Asparagine 110 is a glycosylation site (N-linked (GlcNAc...) asparagine). Residues 115–206 (GSHIIQRMYG…ENGKETLQRA (92 aa)) form an alpha-2 region. Cystine bridges form between cysteine 125–cysteine 188 and cysteine 227–cysteine 283. The segment at 207–298 (DPPKTHVTHH…GLPKPLTLRW (92 aa)) is alpha-3. Positions 209 to 295 (PKTHVTHHPI…QHEGLPKPLT (87 aa)) constitute an Ig-like C1-type domain. The segment at 299-308 (EPSSQSTIPI) is connecting peptide. A helical transmembrane segment spans residues 309-332 (VGIVAGLAVLAVVVIGAVVAAVMC). The Cytoplasmic portion of the chain corresponds to 333 to 362 (RRKSSGGKGGSYSQAASSDSAQGSDVSLTA). A disordered region spans residues 336 to 362 (SSGGKGGSYSQAASSDSAQGSDVSLTA). Position 343 is a phosphoserine (serine 343). The span at 343–362 (SYSQAASSDSAQGSDVSLTA) shows a compositional bias: low complexity. A Phosphotyrosine modification is found at tyrosine 344. 6 positions are modified to phosphoserine: serine 345, serine 349, serine 350, serine 352, serine 356, and serine 359.

It belongs to the MHC class I family. Heterodimer of an alpha chain and a beta chain (beta-2-microglobulin).

It is found in the membrane. Its function is as follows. Involved in the presentation of foreign antigens to the immune system. The protein is Patr class I histocompatibility antigen, A-5 alpha chain of Pan troglodytes (Chimpanzee).